We begin with the raw amino-acid sequence, 289 residues long: Rhodopsin (289 aa).

The Extracellular portion of the chain corresponds to 1 to 7 (YLVNPAA). A helical transmembrane segment spans residues 8 to 32 (YAALGAYMFLLILIGFPINFLTLYV). The Cytoplasmic segment spans residues 33 to 44 (TLEHKKLRTPLN). A helical transmembrane segment spans residues 45–67 (YILLNLAVANLFMVLGGFTTTMY). Topologically, residues 68–81 (TSMHGYFVLGRLGC) are extracellular. Cys-81 and Cys-158 form a disulfide bridge. The helical transmembrane segment at 82–104 (NLEAFFATLGGEIALWSLVVLAI) threads the bilayer. The short motif at 105–107 (ERW) is the 'Ionic lock' involved in activated form stabilization element. Residues 105–123 (ERWIVVCKPISNFRFTEDH) lie on the Cytoplasmic side of the membrane. A helical transmembrane segment spans residues 124–144 (AIMGLAFTWVMALACAVPPLV). At 145-173 (GWSRYIPEGMQCSCGVDYYTRAEGFNNES) the chain is on the extracellular side. Asn-171 is a glycosylation site (N-linked (GlcNAc...) asparagine). A helical membrane pass occupies residues 174-195 (FVIYMFIVHFLIPLSVIFFCYG). Over 196 to 223 (RLLCAVKEAPAAQQESETTQRAEKEVSR) the chain is Cytoplasmic. Residues 224-245 (MVVIMVIGFLVCWLPYASVAWW) traverse the membrane as a helical segment. At 246 to 257 (IFCNQGSDFGPI) the chain is on the extracellular side. The helical transmembrane segment at 258–279 (FMTLPSFFAKSAAIYNPMIYIC) threads the bilayer. Lys-267 carries the post-translational modification N6-(retinylidene)lysine. The Cytoplasmic segment spans residues 280 to 289 (MNKQFRHCMI).

This sequence belongs to the G-protein coupled receptor 1 family. Opsin subfamily. In terms of processing, phosphorylated on some or all of the serine and threonine residues present in the C-terminal region. Contains one covalently linked retinal chromophore.

Its subcellular location is the membrane. The protein resides in the cell projection. It localises to the cilium. The protein localises to the photoreceptor outer segment. Functionally, photoreceptor required for image-forming vision at low light intensity. While most salt water fish species use retinal as chromophore, most freshwater fish use 3-dehydroretinal, or a mixture of retinal and 3-dehydroretinal. Light-induced isomerization of 11-cis to all-trans retinal triggers a conformational change that activates signaling via G-proteins. Subsequent receptor phosphorylation mediates displacement of the bound G-protein alpha subunit by arrestin and terminates signaling. This Abyssocottus korotneffi (Baikalian deep-water sculpin) protein is Rhodopsin (rho).